The primary structure comprises 568 residues: Matrix metalloproteinase-21 (568 aa).

The signal sequence occupies residues methionine 1–proline 24. The propeptide occupies glutamate 25 to glutamine 143. The short motif at proline 110–threonine 117 is the Cysteine switch element. Zn(2+)-binding residues include cysteine 112 and histidine 282. The active site involves glutamate 283. Residues histidine 286 and histidine 292 each contribute to the Zn(2+) site. Cysteines 328 and 559 form a disulfide. Hemopexin repeat units lie at residues lysine 329 to isoleucine 388, threonine 390 to isoleucine 446, proline 447 to isoleucine 495, and phenylalanine 502 to valine 558. Asparagine 371 carries N-linked (GlcNAc...) asparagine glycosylation.

It belongs to the peptidase M10A family. Zn(2+) is required as a cofactor. Ca(2+) serves as cofactor. The precursor is cleaved by a furin endopeptidase.

It is found in the secreted. Plays a specialized role in the generation of left-right asymmetry during embryogenesis. May act as a negative regulator of the NOTCH-signaling pathway. Cleaves alpha-1-antitrypsin. The polypeptide is Matrix metalloproteinase-21 (Mmp21) (Mus musculus (Mouse)).